The following is an 840-amino-acid chain: MHILIDVQGYQSESKVRGIGRSTPAMSRAIIENAGEHRVSILINGMYPIDNINDVKMAYRDLLTDEDMFIFSAVAPTAYRHIENHGRSKAAQAARDIAIANIAPDIVYVISFFEGHSDSYTVSIPADNVPWKTVCVCHDLIPLLNKERYLGDPNFREFYMNKLAEFERADAIFAISQSAAQEVIEYTDIASDRVLNISSAVGEEFAVIDYSAERIQSLKDKYSLPDEFILSLAMIEPRKNIEALIHAYSLLPAELQQRYPMVLAYKVQPEQLERILRLAESYGLSRSQLIFTGFLTDDDLIALYNLCKLFVFPSLHEGFGLPPLEAMRCGAATLGSNITSLPEVIGWEDAMFNPHDVQDIRRVMEKALTDEAFYRELKAHALAQSAKFSWANTAHLAIEGFTRLLQSSQETDAGQAESVTASRLQMMQKIDALSEVDRLGLAWAVARNSFKRHTRKLLVDISVLAQHDAKTGIQRVSRSILSELLKSGVPGYEVSAVYYTPGECYRYANQYLSSHFPGEFGADEPVLFSKDDVLIATDLTAHLFPELVTQIDSMRAAGAFACFVVHDILPLRRPEWSIEGIQRDFPIWLSCLAEHADRLICVSASVAEDVKAWIAENRHWVKPNPLQTVSNFHLGADLDASVPSTGMPDNAQALLAAMAAAPSFIMVGTMEPRKGHAQTLAAFEELWREGKDYNLFIVGKQGWNVDSLCEKLRHHPQLNKKLFWLQNISDEFLAELYARSRALIFASQGEGFGLPLIEAAQKKLPVIIRDIPVFKEIAQEHAWYFSGEAPSDIAKAVEEWLALYEQNAHPRSENINWLTWKQSAEFLLKNLPIIAPAAKQ.

An alpha-(1-&gt;2)-mannosyltransferase region spans residues 2-399; sequence HILIDVQGYQ…WANTAHLAIE (398 aa). The alpha-(1-&gt;3)-mannosyltransferase stretch occupies residues 456–829; the sequence is KLLVDISVLA…WKQSAEFLLK (374 aa).

The protein belongs to the glycosyltransferase group 1 family. Glycosyltransferase 4 subfamily. In terms of assembly, monomer. Interacts with the C-terminal region of WbdD. Interacts with WbdD via a surface-exposed alpha-helix in the C-terminal mannosyltransferase domain. However, the C-terminal domain is unable to interact with WbdD in the absence of its N-terminal partner.

It is found in the cell inner membrane. The enzyme catalyses [alpha-D-Man-(1-&gt;3)-alpha-D-Man-(1-&gt;3)-alpha-D-Man-(1-&gt;2)-alpha-D-Man-(1-&gt;2)](n)-alpha-D-Man-(1-&gt;3)-alpha-D-Man-(1-&gt;3)-alpha-D-Man-(1-&gt;3)-alpha-D-GlcNAc-di-trans,octa-cis-undecaprenyl diphosphate + 2 GDP-alpha-D-mannose = alpha-D-Man-(1-&gt;2)-alpha-D-Man-(1-&gt;2)-[alpha-D-Man-(1-&gt;3)-alpha-D-Man-(1-&gt;3)-alpha-D-Man-(1-&gt;2)-alpha-D-Man-(1-&gt;2)](n)-alpha-D-Man-(1-&gt;3)-alpha-D-Man-(1-&gt;3)-alpha-D-Man-(1-&gt;3)-alpha-D-GlcNAc-di-trans,octa-cis-undecaprenyl diphosphate + 2 GDP + 2 H(+). It carries out the reaction alpha-D-Man-(1-&gt;2)-alpha-D-Man-(1-&gt;2)-[alpha-D-Man-(1-&gt;3)-alpha-D-Man-(1-&gt;3)-alpha-D-Man-(1-&gt;2)-alpha-D-Man-(1-&gt;2)](n)-alpha-D-Man-(1-&gt;3)-alpha-D-Man-(1-&gt;3)-alpha-D-Man-(1-&gt;3)-alpha-D-GlcNAc-di-trans,octa-cis-undecaprenyl diphosphate + 2 GDP-alpha-D-mannose = [alpha-D-Man-(1-&gt;3)-alpha-D-Man-(1-&gt;3)-alpha-D-Man-(1-&gt;2)-alpha-D-Man-(1-&gt;2)](n+1)-alpha-D-Man-(1-&gt;3)-alpha-D-Man-(1-&gt;3)-alpha-D-Man-(1-&gt;3)-alpha-D-GlcNAc-di-trans,octa-cis-undecaprenyl diphosphate + 2 GDP + 2 H(+). It functions in the pathway bacterial outer membrane biogenesis; LPS O-antigen biosynthesis. The alpha-(1-&gt;2)-mannosyltransferase activity of the N-terminal domain is regulated by the activity of the C-terminal alpha-(1-&gt;3)-mannosyltransferase. The relative concentration of WbdA and WbdD is critical in determining the O polysaccharide (OPS) modal chain length. OPS chain length increases with increasing concentration of WbdA, but the maximum length does not increase beyond the wild-type modal length, despite substantial increases in WbdA concentration. In terms of biological role, mannosyltransferase involved in the biosynthesis of the repeat unit of the lipopolysaccharide (LPS) O-antigen region. Catalyzes the polymerization of a tetrasaccharide repeat unit containing two alpha-(1-&gt;3)- and two alpha-(1-&gt;2)-linked mannopyranose residues. Extension is terminated by the action of the chain terminator bifunctional methyltransferase/kinase WbdD. This Escherichia coli protein is Serotype-specific mannosyltransferase WbdA.